The chain runs to 219 residues: Large ribosomal subunit protein uL1 (219 aa).

This sequence belongs to the universal ribosomal protein uL1 family. As to quaternary structure, part of the 50S ribosomal subunit.

Its function is as follows. Binds directly to 23S rRNA. Probably involved in E site tRNA release. In terms of biological role, protein L1 is also a translational repressor protein, it controls the translation of its operon by binding to its mRNA. This chain is Large ribosomal subunit protein uL1, found in Pyrococcus horikoshii (strain ATCC 700860 / DSM 12428 / JCM 9974 / NBRC 100139 / OT-3).